Here is a 595-residue protein sequence, read N- to C-terminus: UvrABC system protein C (595 aa).

Positions 14–91 (DSPGCYIHKD…IQENKPKYNI (78 aa)) constitute a GIY-YIG domain. The UVR domain occupies 196–231 (DKIVNELRDKMTKASELMEFERAAEYRDLIEGIGLL).

This sequence belongs to the UvrC family. In terms of assembly, interacts with UvrB in an incision complex.

It is found in the cytoplasm. Functionally, the UvrABC repair system catalyzes the recognition and processing of DNA lesions. UvrC both incises the 5' and 3' sides of the lesion. The N-terminal half is responsible for the 3' incision and the C-terminal half is responsible for the 5' incision. The polypeptide is UvrABC system protein C (Streptococcus mutans serotype c (strain ATCC 700610 / UA159)).